A 308-amino-acid polypeptide reads, in one-letter code: Probable manganese-dependent inorganic pyrophosphatase (308 aa).

Mn(2+)-binding residues include H9, D13, D15, D75, H97, and D149.

This sequence belongs to the PPase class C family. The cofactor is Mn(2+).

It is found in the cytoplasm. It catalyses the reaction diphosphate + H2O = 2 phosphate + H(+). This chain is Probable manganese-dependent inorganic pyrophosphatase, found in Enterococcus faecalis (strain ATCC 700802 / V583).